The primary structure comprises 548 residues: Zinc metalloproteinase dpy-31 (548 aa).

Positions 1–24 are cleaved as a signal peptide; that stretch reads MSLLRSASLLLVVVTAALPPCTLG. The propeptide occupies 25-150; it reads YSLHDGSRLD…KTGQRRVKRK (126 aa). Residues 150–349 form the Peptidase M12A domain; it reads KFIGSDLRRW…IRLMNKIYCS (200 aa). Asparagine 190 carries N-linked (GlcNAc...) asparagine glycosylation. 5 cysteine pairs are disulfide-bonded: cysteine 193–cysteine 348, cysteine 216–cysteine 237, cysteine 352–cysteine 372, cysteine 374–cysteine 383, and cysteine 394–cysteine 422. Zn(2+) is bound at residue histidine 245. Residue glutamate 246 is part of the active site. The Zn(2+) site is built by histidine 249 and histidine 255. The EGF-like domain occupies 344 to 384; sequence NKIYCSNVCSRKLPCQRGGYTDPRRCDRCRCPDGFTGQFCE. One can recognise a CUB domain in the interval 394–510; it reads CGGRIQVNSG…RGFEARARAL (117 aa). Asparagine 461 carries an N-linked (GlcNAc...) asparagine glycan. The 35-residue stretch at 513-547 folds into the TSP type-1 domain; that stretch reads NGQWASWTPWTPCTASCGACGSRMRTRVCPHGACP. 3 cysteine pairs are disulfide-bonded: cysteine 525–cysteine 546, cysteine 529–cysteine 546, and cysteine 541–cysteine 546.

Requires Zn(2+) as cofactor.

The protein localises to the secreted. Functionally, metalloprotease which cleaves the carboxyl terminus of procollagens to mature collagens. Probably involved in cuticular collagen maturation. In Haemonchus contortus (Barber pole worm), this protein is Zinc metalloproteinase dpy-31.